A 378-amino-acid polypeptide reads, in one-letter code: Queuine tRNA-ribosyltransferase (378 aa).

Catalysis depends on Asp90, which acts as the Proton acceptor. Residues Asp90–Phe94, Asp144, Gln188, and Gly220 contribute to the substrate site. Residues Gly251 to Asp257 are RNA binding. Asp270 acts as the Nucleophile in catalysis. The interval Thr275–Arg279 is RNA binding; important for wobble base 34 recognition. The Zn(2+) site is built by Cys308, Cys310, Cys313, and His339.

This sequence belongs to the queuine tRNA-ribosyltransferase family. Homodimer. Within each dimer, one monomer is responsible for RNA recognition and catalysis, while the other monomer binds to the replacement base PreQ1. The cofactor is Zn(2+).

It catalyses the reaction 7-aminomethyl-7-carbaguanine + guanosine(34) in tRNA = 7-aminomethyl-7-carbaguanosine(34) in tRNA + guanine. It functions in the pathway tRNA modification; tRNA-queuosine biosynthesis. Functionally, catalyzes the base-exchange of a guanine (G) residue with the queuine precursor 7-aminomethyl-7-deazaguanine (PreQ1) at position 34 (anticodon wobble position) in tRNAs with GU(N) anticodons (tRNA-Asp, -Asn, -His and -Tyr). Catalysis occurs through a double-displacement mechanism. The nucleophile active site attacks the C1' of nucleotide 34 to detach the guanine base from the RNA, forming a covalent enzyme-RNA intermediate. The proton acceptor active site deprotonates the incoming PreQ1, allowing a nucleophilic attack on the C1' of the ribose to form the product. After dissociation, two additional enzymatic reactions on the tRNA convert PreQ1 to queuine (Q), resulting in the hypermodified nucleoside queuosine (7-(((4,5-cis-dihydroxy-2-cyclopenten-1-yl)amino)methyl)-7-deazaguanosine). This chain is Queuine tRNA-ribosyltransferase, found in Nautilia profundicola (strain ATCC BAA-1463 / DSM 18972 / AmH).